Reading from the N-terminus, the 742-residue chain is Tegument protein UL47 (742 aa).

Residues 1–10 show a composition bias toward basic and acidic residues; that stretch reads MDAARDGRPE. Disordered stretches follow at residues 1–128 and 155–199; these read MDAA…TAHL and EFPP…DDAA. A Nuclear localization signal motif is present at residues 10–30; the sequence is ERRPRRSGTYRTHPFQRPSAR. The segment covering 18 to 37 has biased composition (low complexity); the sequence is TYRTHPFQRPSARRSLLDAL. A compositionally biased stretch (basic and acidic residues) spans 38–62; sequence RAADAEAAERPRVRRPRPDFQRPPD. The span at 63–88 shows a compositional bias: acidic residues; the sequence is EDTSEDENVYDYIDGDSSDSADDYDS. The Nuclear export signal signature appears at 95-122; it reads RGPNHGAGDAMDTDAPPERAPEGGAPQD. Residues 485 to 495 carry the Nuclear export signal motif; that stretch reads LSAYLTLFVAL.

It belongs to the alphaherpesvirinae HHV-1 UL47 family. As to quaternary structure, interacts with US3 kinase. Interacts with UL31 and UL34; these interactions seem important for efficient virion nuclear egress. Interacts with UL41/VHS. Phosphorylated by US3. This phosphorylation is required for proper nuclear localization.

It is found in the virion tegument. The protein resides in the host nucleus. The protein localises to the host cytoplasm. In terms of biological role, tegument protein that can bind to various RNA transcripts. Plays a role in the attenuation of selective viral and cellular mRNA degradation by modulating the activity of host shutoff RNase UL41/VHS. Also plays a role in the primary envelopment of virions in the perinuclear space, probably by interacting with two nuclear egress proteins UL31 and UL34. This is Tegument protein UL47 from Bos taurus (Bovine).